Reading from the N-terminus, the 331-residue chain is Anthranilate phosphoribosyltransferase (331 aa).

5-phospho-alpha-D-ribose 1-diphosphate-binding positions include glycine 79, glycine 82–aspartate 83, threonine 87, asparagine 89–threonine 92, lysine 107–serine 115, and alanine 119. Residue glycine 79 coordinates anthranilate. Residue serine 91 coordinates Mg(2+). Anthranilate is bound at residue asparagine 110. Residue arginine 165 participates in anthranilate binding. The Mg(2+) site is built by aspartate 223 and glutamate 224.

Belongs to the anthranilate phosphoribosyltransferase family. As to quaternary structure, homodimer. Mg(2+) is required as a cofactor.

It catalyses the reaction N-(5-phospho-beta-D-ribosyl)anthranilate + diphosphate = 5-phospho-alpha-D-ribose 1-diphosphate + anthranilate. Its pathway is amino-acid biosynthesis; L-tryptophan biosynthesis; L-tryptophan from chorismate: step 2/5. Functionally, catalyzes the transfer of the phosphoribosyl group of 5-phosphorylribose-1-pyrophosphate (PRPP) to anthranilate to yield N-(5'-phosphoribosyl)-anthranilate (PRA). The polypeptide is Anthranilate phosphoribosyltransferase (Bacteroides fragilis (strain YCH46)).